Consider the following 94-residue polypeptide: Long neurotoxin LNTX8 (94 aa).

A signal peptide spans 1 to 21; the sequence is MKTLLLTLVVVTIMCLDLGYT. Cystine bridges form between Cys24/Cys43, Cys36/Cys64, Cys49/Cys53, Cys68/Cys79, and Cys80/Cys85.

This sequence belongs to the three-finger toxin family. Long-chain subfamily. Type II alpha-neurotoxin sub-subfamily. Expressed by the venom gland.

The protein localises to the secreted. In terms of biological role, binds with high affinity to muscular (alpha-1/CHRNA1) and neuronal (alpha-7/CHRNA7) nicotinic acetylcholine receptor (nAChR) and inhibits acetylcholine from binding to the receptor, thereby impairing neuromuscular and neuronal transmission. This chain is Long neurotoxin LNTX8, found in Ophiophagus hannah (King cobra).